A 193-amino-acid chain; its full sequence is FMN-dependent NADH:quinone oxidoreductase (193 aa).

Residues Ser9, Ser15–Ser17, and Thr137–Gly140 each bind FMN.

It belongs to the azoreductase type 1 family. Homodimer. It depends on FMN as a cofactor.

The catalysed reaction is 2 a quinone + NADH + H(+) = 2 a 1,4-benzosemiquinone + NAD(+). The enzyme catalyses N,N-dimethyl-1,4-phenylenediamine + anthranilate + 2 NAD(+) = 2-(4-dimethylaminophenyl)diazenylbenzoate + 2 NADH + 2 H(+). In terms of biological role, quinone reductase that provides resistance to thiol-specific stress caused by electrophilic quinones. Also exhibits azoreductase activity. Catalyzes the reductive cleavage of the azo bond in aromatic azo compounds to the corresponding amines. This chain is FMN-dependent NADH:quinone oxidoreductase, found in Pelagibacter ubique (strain HTCC1062).